We begin with the raw amino-acid sequence, 154 residues long: Transcriptional repressor NrdR (154 aa).

The segment at 3 to 34 is a zinc-finger region; that stretch reads CPYCRHPDSRVVDSREADDGQLIRRRRSCPEC. Residues 46–136 enclose the ATP-cone domain; the sequence is LAVVKRSGVT…VYRSFESLAD (91 aa).

This sequence belongs to the NrdR family. Zn(2+) serves as cofactor.

Its function is as follows. Negatively regulates transcription of bacterial ribonucleotide reductase nrd genes and operons by binding to NrdR-boxes. This is Transcriptional repressor NrdR from Salinispora tropica (strain ATCC BAA-916 / DSM 44818 / JCM 13857 / NBRC 105044 / CNB-440).